The primary structure comprises 532 residues: Intercellular adhesion molecule 1 (532 aa).

The signal sequence occupies residues 1–27; that stretch reads MAPSSPRPALPALLVLLGALFPGPGNA. The Extracellular segment spans residues 28–480; it reads QTSVSPPKVI…TVNVLSPRYE (453 aa). Ig-like C2-type domains lie at 41-103 and 128-193; these read GGSV…QSTA and GKDL…LDLR. Intrachain disulfides connect Cys-48–Cys-92, Cys-52–Cys-96, and Cys-135–Cys-186. N-linked (GlcNAc...) asparagine glycosylation occurs at Asn-145. Positions 152 to 154 match the Cell attachment site; atypical motif; it reads RGE. N-linked (GlcNAc...) asparagine glycosylation is found at Asn-183, Asn-202, Asn-267, and Asn-296. Ig-like C2-type domains lie at 230-297 and 325-378; these read DTQG…LGNQ and GTEV…LEVA. Residues Cys-237 and Cys-290 are joined by a disulfide bond. Cys-332 and Cys-371 are disulfide-bonded. N-linked (GlcNAc...) asparagine glycans are attached at residues Asn-385 and Asn-406. Disulfide bonds link Cys-403/Cys-419, Cys-419/Cys-457, and Cys-431/Cys-457. The 53-residue stretch at 412 to 464 folds into the Ig-like C2-type 5 domain; the sequence is NSQQTPMCQASGNPLPELKCLKDGTFPLPVGESVTVTRDLEGTYLCRARSTQG. A helical transmembrane segment spans residues 481-503; it reads IVIITVVAAAVIMGTAGLSTYLY. Topologically, residues 504-532 are cytoplasmic; sequence NRQRKIRKYRLQQAQKGTPMKPNTQATPP. Residues Thr-521 and Thr-530 each carry the phosphothreonine modification.

Belongs to the immunoglobulin superfamily. ICAM family. As to quaternary structure, homodimer. Interacts with MUC1 and promotes cell aggregation in epithelial cells. Interacts with ARHGEF26/SGEF. Interacts (on T cell side) with CD81, CD247 and CD9 at immunological synapses between antigen-presenting cells and T cells. In terms of processing, monoubiquitinated, which is promoted by MARCH9 and leads to endocytosis.

The protein resides in the membrane. ICAM proteins are ligands for the leukocyte adhesion protein LFA-1 (integrin alpha-L/beta-2). During leukocyte trans-endothelial migration, ICAM1 engagement promotes the assembly of endothelial apical cups through ARHGEF26/SGEF and RHOG activation. In Pan paniscus (Pygmy chimpanzee), this protein is Intercellular adhesion molecule 1 (ICAM1).